Here is a 79-residue protein sequence, read N- to C-terminus: Small ribosomal subunit protein uS17 (79 aa).

The protein belongs to the universal ribosomal protein uS17 family. As to quaternary structure, part of the 30S ribosomal subunit.

One of the primary rRNA binding proteins, it binds specifically to the 5'-end of 16S ribosomal RNA. This is Small ribosomal subunit protein uS17 from Rhizobium etli (strain ATCC 51251 / DSM 11541 / JCM 21823 / NBRC 15573 / CFN 42).